Reading from the N-terminus, the 293-residue chain is tRNA pseudouridine synthase B (293 aa).

Asp-38 (nucleophile) is an active-site residue.

This sequence belongs to the pseudouridine synthase TruB family. Type 1 subfamily.

It carries out the reaction uridine(55) in tRNA = pseudouridine(55) in tRNA. Its function is as follows. Responsible for synthesis of pseudouridine from uracil-55 in the psi GC loop of transfer RNAs. In Nostoc sp. (strain PCC 7120 / SAG 25.82 / UTEX 2576), this protein is tRNA pseudouridine synthase B.